Reading from the N-terminus, the 459-residue chain is Alpha-N-acetylgalactosaminidase (459 aa).

Positions 1–31 form a signal peptide, tat-type signal; the sequence is MHNIHRRHFLKAAGAVTAGLVTANIALNANA. NAD(+)-binding positions include 64–65, Asp86, 135–138, 155–156, and Asn184; these read ER, WEWH, and EV. Residues Tyr213, Arg232, 244-247, and Tyr326 each bind substrate; that span reads YPTH. Residue Tyr244 coordinates NAD(+).

The protein belongs to the Gfo/Idh/MocA family. Glycosyl hydrolase 109 subfamily. NAD(+) is required as a cofactor. Post-translationally, predicted to be exported by the Tat system. The position of the signal peptide cleavage has not been experimentally proven.

It carries out the reaction Cleavage of non-reducing alpha-(1-&gt;3)-N-acetylgalactosamine residues from human blood group A and AB mucin glycoproteins, Forssman hapten and blood group A lacto series glycolipids.. In terms of biological role, glycosidase that has specific alpha-N-acetylgalactosaminidase activity. This is Alpha-N-acetylgalactosaminidase (nagA) from Shewanella oneidensis (strain ATCC 700550 / JCM 31522 / CIP 106686 / LMG 19005 / NCIMB 14063 / MR-1).